The following is a 165-amino-acid chain: MSKKGKKKSKNNSSVDGNRRLAENRQARYEYEILETLETGLELLGTEVKSIRAGKVNLKDGFCLIKKDQIQLHNVHISPHNHAGKFFNHEPLRIKRLLAHRKEIEKLKISLERKGLTIIPLSLYLKGSWIKLKIGVGKGRKTHDKRDREKINDSKRDVANALKRF.

The span at 1-10 shows a compositional bias: basic residues; it reads MSKKGKKKSK. The tract at residues 1–21 is disordered; it reads MSKKGKKKSKNNSSVDGNRRL.

This sequence belongs to the SmpB family.

It localises to the cytoplasm. Its function is as follows. Required for rescue of stalled ribosomes mediated by trans-translation. Binds to transfer-messenger RNA (tmRNA), required for stable association of tmRNA with ribosomes. tmRNA and SmpB together mimic tRNA shape, replacing the anticodon stem-loop with SmpB. tmRNA is encoded by the ssrA gene; the 2 termini fold to resemble tRNA(Ala) and it encodes a 'tag peptide', a short internal open reading frame. During trans-translation Ala-aminoacylated tmRNA acts like a tRNA, entering the A-site of stalled ribosomes, displacing the stalled mRNA. The ribosome then switches to translate the ORF on the tmRNA; the nascent peptide is terminated with the 'tag peptide' encoded by the tmRNA and targeted for degradation. The ribosome is freed to recommence translation, which seems to be the essential function of trans-translation. The chain is SsrA-binding protein from Prochlorococcus marinus (strain NATL1A).